Consider the following 372-residue polypeptide: uncharacterized protein (372 aa).

Position 4–18 (4–18 (YIIVGAGILGASTAY)) interacts with FAD.

Belongs to the DadA oxidoreductase family. FAD serves as cofactor.

This is an uncharacterized protein from Bacillus subtilis (strain 168).